The chain runs to 238 residues: Ribonuclease PH (238 aa).

Phosphate-binding positions include arginine 86 and 124–126; that span reads GTR.

Belongs to the RNase PH family. In terms of assembly, homohexameric ring arranged as a trimer of dimers.

It catalyses the reaction tRNA(n+1) + phosphate = tRNA(n) + a ribonucleoside 5'-diphosphate. Its function is as follows. Phosphorolytic 3'-5' exoribonuclease that plays an important role in tRNA 3'-end maturation. Removes nucleotide residues following the 3'-CCA terminus of tRNAs; can also add nucleotides to the ends of RNA molecules by using nucleoside diphosphates as substrates, but this may not be physiologically important. Probably plays a role in initiation of 16S rRNA degradation (leading to ribosome degradation) during starvation. The polypeptide is Ribonuclease PH (Hahella chejuensis (strain KCTC 2396)).